A 772-amino-acid chain; its full sequence is Carnitine O-palmitoyltransferase 1, muscle isoform (772 aa).

Over 1–47 (MAEAHQAVAFQFTVTPDGVDFRLSREALRHIYLSGINSWKKRLIRIK) the chain is Cytoplasmic. A helical transmembrane segment spans residues 48–73 (NGILRGVYPGSPTSWLVVVMATVGSN). The Mitochondrial intermembrane portion of the chain corresponds to 74 to 102 (YCKVDISMGLVHCIQRCLPTRYGSYGTPQ). The chain crosses the membrane as a helical span at residues 103 to 122 (TETLLSMVIFSTGVWATGIF). Residues 123–772 (LFRQTLKLLL…DLFKISKTDS (650 aa)) lie on the Cytoplasmic side of the membrane. His473 (proton acceptor) is an active-site residue. 555–567 (GKGLIKKCRTSPD) provides a ligand contact to CoA. Tyr589 and Thr602 together coordinate (R)-carnitine.

It belongs to the carnitine/choline acetyltransferase family. High expression in heart, skeletal muscle and brown adipose tissue. Also expressed in white adipose tissue, but not in liver.

The protein resides in the mitochondrion outer membrane. It carries out the reaction (R)-carnitine + hexadecanoyl-CoA = O-hexadecanoyl-(R)-carnitine + CoA. Its pathway is lipid metabolism; fatty acid beta-oxidation. Functionally, catalyzes the transfer of the acyl group of long-chain fatty acid-CoA conjugates onto carnitine, an essential step for the mitochondrial uptake of long-chain fatty acids and their subsequent beta-oxidation in the mitochondrion. The sequence is that of Carnitine O-palmitoyltransferase 1, muscle isoform (Cpt1b) from Rattus norvegicus (Rat).